We begin with the raw amino-acid sequence, 397 residues long: Elongation factor Tu (397 aa).

The region spanning 10–206 (KPHVNIGTIG…AVDEAIPTPP (197 aa)) is the tr-type G domain. The interval 19–26 (GHIDHGKT) is G1. 19 to 26 (GHIDHGKT) provides a ligand contact to GTP. Thr26 is a Mg(2+) binding site. The segment at 62-66 (GITIS) is G2. The G3 stretch occupies residues 83–86 (DCPG). GTP contacts are provided by residues 83 to 87 (DCPGH) and 138 to 141 (NKAD). Residues 138–141 (NKAD) are G4. Residues 176-178 (SAL) are G5.

The protein belongs to the TRAFAC class translation factor GTPase superfamily. Classic translation factor GTPase family. EF-Tu/EF-1A subfamily. In terms of assembly, monomer.

It is found in the cytoplasm. The catalysed reaction is GTP + H2O = GDP + phosphate + H(+). Functionally, GTP hydrolase that promotes the GTP-dependent binding of aminoacyl-tRNA to the A-site of ribosomes during protein biosynthesis. The sequence is that of Elongation factor Tu from Kitasatospora aureofaciens (Streptomyces aureofaciens).